Here is an 82-residue protein sequence, read N- to C-terminus: Small ribosomal subunit protein bS16 (82 aa).

This sequence belongs to the bacterial ribosomal protein bS16 family.

This Serratia proteamaculans (strain 568) protein is Small ribosomal subunit protein bS16.